The sequence spans 544 residues: Chaperonin GroEL (544 aa).

ATP contacts are provided by residues 30–33 (TLGP), 87–91 (DGTTT), Gly-414, 478–480 (NAL), and Asp-494.

It belongs to the chaperonin (HSP60) family. In terms of assembly, forms a cylinder of 14 subunits composed of two heptameric rings stacked back-to-back. Interacts with the co-chaperonin GroES.

It is found in the cytoplasm. The catalysed reaction is ATP + H2O + a folded polypeptide = ADP + phosphate + an unfolded polypeptide.. Together with its co-chaperonin GroES, plays an essential role in assisting protein folding. The GroEL-GroES system forms a nano-cage that allows encapsulation of the non-native substrate proteins and provides a physical environment optimized to promote and accelerate protein folding. This chain is Chaperonin GroEL, found in Pelotomaculum thermopropionicum (strain DSM 13744 / JCM 10971 / SI).